Here is a 456-residue protein sequence, read N- to C-terminus: Bifunctional protein GlmU (456 aa).

The interval 1-229 (MLNNAMSVVI…LSEVEGVNNR (229 aa)) is pyrophosphorylase. UDP-N-acetyl-alpha-D-glucosamine contacts are provided by residues 11–14 (LAAG), Lys25, Gln76, 81–82 (GT), 103–105 (YGD), Gly140, Glu154, Asn169, and Asn227. Asp105 is a Mg(2+) binding site. Asn227 is a Mg(2+) binding site. A linker region spans residues 230-250 (LQLSRLERVYQSEQAEKLLLA). Residues 251-456 (GVMLRDPARF…EGWRRPVKKK (206 aa)) are N-acetyltransferase. The UDP-N-acetyl-alpha-D-glucosamine site is built by Arg333 and Lys351. His363 acts as the Proton acceptor in catalysis. Residues Tyr366 and Asn377 each coordinate UDP-N-acetyl-alpha-D-glucosamine. Residues Ala380, 386–387 (NY), Ser405, Ala423, and Arg440 each bind acetyl-CoA.

In the N-terminal section; belongs to the N-acetylglucosamine-1-phosphate uridyltransferase family. This sequence in the C-terminal section; belongs to the transferase hexapeptide repeat family. Homotrimer. Mg(2+) is required as a cofactor.

Its subcellular location is the cytoplasm. It carries out the reaction alpha-D-glucosamine 1-phosphate + acetyl-CoA = N-acetyl-alpha-D-glucosamine 1-phosphate + CoA + H(+). It catalyses the reaction N-acetyl-alpha-D-glucosamine 1-phosphate + UTP + H(+) = UDP-N-acetyl-alpha-D-glucosamine + diphosphate. It functions in the pathway nucleotide-sugar biosynthesis; UDP-N-acetyl-alpha-D-glucosamine biosynthesis; N-acetyl-alpha-D-glucosamine 1-phosphate from alpha-D-glucosamine 6-phosphate (route II): step 2/2. The protein operates within nucleotide-sugar biosynthesis; UDP-N-acetyl-alpha-D-glucosamine biosynthesis; UDP-N-acetyl-alpha-D-glucosamine from N-acetyl-alpha-D-glucosamine 1-phosphate: step 1/1. It participates in bacterial outer membrane biogenesis; LPS lipid A biosynthesis. Functionally, catalyzes the last two sequential reactions in the de novo biosynthetic pathway for UDP-N-acetylglucosamine (UDP-GlcNAc). The C-terminal domain catalyzes the transfer of acetyl group from acetyl coenzyme A to glucosamine-1-phosphate (GlcN-1-P) to produce N-acetylglucosamine-1-phosphate (GlcNAc-1-P), which is converted into UDP-GlcNAc by the transfer of uridine 5-monophosphate (from uridine 5-triphosphate), a reaction catalyzed by the N-terminal domain. This chain is Bifunctional protein GlmU, found in Escherichia coli O45:K1 (strain S88 / ExPEC).